The primary structure comprises 158 residues: Troponin C, isoform 1 (158 aa).

Ser-1 is modified (N-acetylserine). EF-hand domains follow at residues Glu-15 to Lys-50, Val-51 to Glu-86, Ala-91 to Arg-126, and Leu-127 to Gly-158. 5 residues coordinate Ca(2+): Asp-64, Asp-66, Ser-68, Gln-70, and Glu-75. Ca(2+)-binding residues include Asp-140, Asp-142, Ser-144, Thr-146, and Glu-151.

Belongs to the troponin C family.

Functionally, troponin is the central regulatory protein of striated muscle contraction. Tn consists of three components: Tn-I which is the inhibitor of actomyosin ATPase, Tn-T which contains the binding site for tropomyosin and Tn-C. The binding of calcium to Tn-C abolishes the inhibitory action of Tn on actin filaments. The chain is Troponin C, isoform 1 from Balanus nubilus (Giant acorn barnacle).